Here is a 238-residue protein sequence, read N- to C-terminus: Ribonuclease PH (238 aa).

Phosphate-binding positions include R86 and 124–126 (GTR).

It belongs to the RNase PH family. In terms of assembly, homohexameric ring arranged as a trimer of dimers.

It carries out the reaction tRNA(n+1) + phosphate = tRNA(n) + a ribonucleoside 5'-diphosphate. Functionally, phosphorolytic 3'-5' exoribonuclease that plays an important role in tRNA 3'-end maturation. Removes nucleotide residues following the 3'-CCA terminus of tRNAs; can also add nucleotides to the ends of RNA molecules by using nucleoside diphosphates as substrates, but this may not be physiologically important. Probably plays a role in initiation of 16S rRNA degradation (leading to ribosome degradation) during starvation. This chain is Ribonuclease PH, found in Vibrio atlanticus (strain LGP32) (Vibrio splendidus (strain Mel32)).